Consider the following 187-residue polypeptide: Threonylcarbamoyl-AMP synthase (187 aa).

The 185-residue stretch at 3 to 187 folds into the YrdC-like domain; it reads QVLPADAAEL…ARSGTVIREG (185 aa).

The protein belongs to the SUA5 family. TsaC subfamily.

Its subcellular location is the cytoplasm. The catalysed reaction is L-threonine + hydrogencarbonate + ATP = L-threonylcarbamoyladenylate + diphosphate + H2O. In terms of biological role, required for the formation of a threonylcarbamoyl group on adenosine at position 37 (t(6)A37) in tRNAs that read codons beginning with adenine. Catalyzes the conversion of L-threonine, HCO(3)(-)/CO(2) and ATP to give threonylcarbamoyl-AMP (TC-AMP) as the acyladenylate intermediate, with the release of diphosphate. This Shewanella pealeana (strain ATCC 700345 / ANG-SQ1) protein is Threonylcarbamoyl-AMP synthase.